A 680-amino-acid chain; its full sequence is Fermitin family homolog 2 (680 aa).

The tract at residues 40-81 (HIGGVMLKLVEKLDVKKDWSDHALWWEKKRTWLLKTHWTLDK) is interaction with membranes containing phosphatidylinositol phosphate. Positions 141-165 (LKKPRDPTKKKKKKLDDQSEDEALE) are disordered. Phosphoserine is present on residues Ser159, Ser181, Ser339, and Ser351. An FERM domain is found at 189–661 (MTPTYDAHDG…GYIFLSTRAK (473 aa)). In terms of domain architecture, PH spans 380–476 (KVFKPKKLTL…WMAACRLASK (97 aa)). Residue Lys383 coordinates a 1,2-diacyl-sn-glycero-3-phospho-(1D-myo-inositol-3,4,5-trisphosphate). Ser666 carries the post-translational modification Phosphoserine.

It belongs to the kindlin family. Interacts with ILK. Interacts with FBLIM1. Interacts with ITGB1 and ITGB3. Interacts with active, unphosphorylated CTNNB1. Identified in a complex with CTNNB1 and TCF7L2/TCF4. Interacts with ITGB1; the interaction is inhibited in presence of ITGB1BP1. As to expression, ubiquitous. Found in numerous tumor tissues.

The protein localises to the cytoplasm. Its subcellular location is the cell cortex. The protein resides in the cytoskeleton. It localises to the stress fiber. It is found in the cell junction. The protein localises to the focal adhesion. Its subcellular location is the membrane. The protein resides in the cell projection. It localises to the lamellipodium membrane. It is found in the nucleus. The protein localises to the myofibril. Its subcellular location is the sarcomere. The protein resides in the i band. It localises to the cell surface. Scaffolding protein that enhances integrin activation mediated by TLN1 and/or TLN2, but activates integrins only weakly by itself. Binds to membranes enriched in phosphoinositides. Enhances integrin-mediated cell adhesion onto the extracellular matrix and cell spreading; this requires both its ability to interact with integrins and with phospholipid membranes. Required for the assembly of focal adhesions. Participates in the connection between extracellular matrix adhesion sites and the actin cytoskeleton and also in the orchestration of actin assembly and cell shape modulation. Recruits FBLIM1 to focal adhesions. Plays a role in the TGFB1 and integrin signaling pathways. Stabilizes active CTNNB1 and plays a role in the regulation of transcription mediated by CTNNB1 and TCF7L2/TCF4 and in Wnt signaling. In Homo sapiens (Human), this protein is Fermitin family homolog 2 (FERMT2).